The following is a 268-amino-acid chain: LOB domain-containing protein 13 (268 aa).

The 102-residue stretch at 51-152 (TPCAACKLLR…SELTTVRTEI (102 aa)) folds into the LOB domain. The segment at 191–268 (LLPPPPPPPP…SSDNNVHYFD (78 aa)) is disordered. Pro residues-rich tracts occupy residues 192–205 (LPPPPPPPPTPRPP) and 212–222 (PAPPPTPPVSL). Residues 223–243 (PSPSMVVSSSSSSNSSATNSM) are compositionally biased toward low complexity. Residues 250 to 268 (STAGYSNSLSSDNNVHYFD) are compositionally biased toward polar residues.

The protein belongs to the LOB domain-containing protein family. In terms of tissue distribution, expressed in shoots and roots and at low levels in flowers, but not in leaves or inflorescence stems.

This is LOB domain-containing protein 13 (LBD13) from Arabidopsis thaliana (Mouse-ear cress).